Here is a 203-residue protein sequence, read N- to C-terminus: Probable cytochrome c oxidase subunit 3 (203 aa).

The next 5 membrane-spanning stretches (helical) occupy residues 30 to 50, 71 to 91, 96 to 116, 143 to 163, and 179 to 199; these read IVWL…YFSA, VPVT…VFAA, IFGL…FVLG, ATGF…FLLV, and IVVS…FTVI.

It belongs to the cytochrome c oxidase subunit 3 family.

The protein resides in the cell membrane. The catalysed reaction is 4 Fe(II)-[cytochrome c] + O2 + 8 H(+)(in) = 4 Fe(III)-[cytochrome c] + 2 H2O + 4 H(+)(out). The sequence is that of Probable cytochrome c oxidase subunit 3 (ctaE) from Mycobacterium bovis (strain ATCC BAA-935 / AF2122/97).